Here is a 429-residue protein sequence, read N- to C-terminus: MKKKPFYKVLYVQVIFAIVVGVILGHYYPSLATEMKPLGDGFIKLIKMVIGPIIFCTVVTGIAGMEDMKKVGRVGGKALLYFEIVSTFALVLGLAATHILRPGVGFNIDPATLDGKAVASYAAKAHGQSTVDFLMHIIPNTMVDAFAQGEILQILLIALLFGSVLAHLGERGKVVTDFIDGLTRVLFGIVHIVTKLAPIGAFGAMAFTIGKYGVGSLVPLLKLIGTFYLTSVVFVLVVLGAIARFTGFSIIRFVSYIKEELLIVLGTSSSEAALPQLMEKLEKAGCSRSVVGLVVPTGYSFNLDGTNIYMTMAVLFIAQATNIELTWMQQLTLLAVAMLTSKGASGVTGAGFITLAATLAVVPTIPLSGMVLILGIDRFMSECRALTNIVGNGVATVVVSAWEKELDRAKLRQALKGGGEVAATETAGV.

The next 8 membrane-spanning stretches (helical) occupy residues 9–29, 45–65, 79–99, 149–169, 185–205, 223–243, 308–328, and 356–376; these read VLYV…HYYP, LIKM…IAGM, LLYF…ATHI, GEIL…AHLG, VLFG…FGAM, LIGT…GAIA, IYMT…LTWM, and AATL…ILGI.

This sequence belongs to the dicarboxylate/amino acid:cation symporter (DAACS) (TC 2.A.23) family.

It is found in the cell inner membrane. In terms of biological role, responsible for the transport of dicarboxylates such as succinate, fumarate, and malate from the periplasm across the membrane. The sequence is that of C4-dicarboxylate transport protein from Burkholderia multivorans (strain ATCC 17616 / 249).